Consider the following 151-residue polypeptide: UPF0208 membrane protein NT01EI_2692 (151 aa).

2 consecutive transmembrane segments (helical) span residues 46–65 (FAIR…QIAL) and 69–91 (LGPA…WWLG).

This sequence belongs to the UPF0208 family.

The protein resides in the cell inner membrane. The chain is UPF0208 membrane protein NT01EI_2692 from Edwardsiella ictaluri (strain 93-146).